The primary structure comprises 561 residues: Arginine--tRNA ligase (561 aa).

The 'HIGH' region signature appears at 119–129 (PNIAKPMSMGH).

The protein belongs to the class-I aminoacyl-tRNA synthetase family. Monomer.

Its subcellular location is the cytoplasm. The enzyme catalyses tRNA(Arg) + L-arginine + ATP = L-arginyl-tRNA(Arg) + AMP + diphosphate. The polypeptide is Arginine--tRNA ligase (Lactobacillus acidophilus (strain ATCC 700396 / NCK56 / N2 / NCFM)).